The primary structure comprises 312 residues: Putative tricarboxylate transport protein, mitochondrial (312 aa).

Solcar repeat units lie at residues 23–111 (EKTV…LKSQ), 122–208 (VMRL…LKDW), and 218–303 (ISKP…IIEF). A run of 6 helical transmembrane segments spans residues 29–49 (IVIG…TEYV), 75–95 (VNGH…YGSI), 126–146 (LCGL…METV), 164–184 (FVHG…YKGV), 221–241 (PIVG…NTPI), and 286–306 (VCLD…FLDV).

Belongs to the mitochondrial carrier (TC 2.A.29) family.

It localises to the mitochondrion inner membrane. Its function is as follows. Transport of citrate across inner mitochondrial membrane. The protein is Putative tricarboxylate transport protein, mitochondrial of Caenorhabditis elegans.